The chain runs to 390 residues: Formate-dependent phosphoribosylglycinamide formyltransferase (390 aa).

N(1)-(5-phospho-beta-D-ribosyl)glycinamide-binding positions include 19–20 and glutamate 79; that span reads EL. Residues arginine 111, lysine 152, 157-162, 192-195, and glutamate 200 contribute to the ATP site; these read SSGKGQ and EGFV. The region spanning 116–305 is the ATP-grasp domain; the sequence is RLAAEELGLP…EFAIHARAIL (190 aa). Glutamate 264 and glutamate 276 together coordinate Mg(2+). N(1)-(5-phospho-beta-D-ribosyl)glycinamide contacts are provided by residues aspartate 283, lysine 353, and 360 to 361; that span reads RR.

Belongs to the PurK/PurT family. In terms of assembly, homodimer.

The enzyme catalyses N(1)-(5-phospho-beta-D-ribosyl)glycinamide + formate + ATP = N(2)-formyl-N(1)-(5-phospho-beta-D-ribosyl)glycinamide + ADP + phosphate + H(+). The protein operates within purine metabolism; IMP biosynthesis via de novo pathway; N(2)-formyl-N(1)-(5-phospho-D-ribosyl)glycinamide from N(1)-(5-phospho-D-ribosyl)glycinamide (formate route): step 1/1. In terms of biological role, involved in the de novo purine biosynthesis. Catalyzes the transfer of formate to 5-phospho-ribosyl-glycinamide (GAR), producing 5-phospho-ribosyl-N-formylglycinamide (FGAR). Formate is provided by PurU via hydrolysis of 10-formyl-tetrahydrofolate. In Marinobacter nauticus (strain ATCC 700491 / DSM 11845 / VT8) (Marinobacter aquaeolei), this protein is Formate-dependent phosphoribosylglycinamide formyltransferase.